Here is a 141-residue protein sequence, read N- to C-terminus: Hemoglobin subunit alpha-1 (141 aa).

The 141-residue stretch at 1 to 141 (VLTDEDKARV…LSKDLVSKYR (141 aa)) folds into the Globin domain. His58 provides a ligand contact to O2. His87 is a heme b binding site.

The protein belongs to the globin family. Heterotetramer of two alpha chains and two beta chains. Red blood cells.

In terms of biological role, involved in oxygen transport from the lung to the various peripheral tissues. The protein is Hemoglobin subunit alpha-1 of Naja naja (Indian cobra).